The sequence spans 357 residues: Hydroxyproline O-arabinosyltransferase RDN1 (357 aa).

Residues 13–33 traverse the membrane as a helical; Signal-anchor segment; it reads LLMLLMVLGFSFATYNLVFMM.

In terms of tissue distribution, expressed in the vasculature of leaves, petioles, stems and roots. Expressed in the vascular cylinder throughout the root, and nodule vasculature.

The protein localises to the golgi apparatus membrane. The enzyme catalyses trans-4-hydroxy-L-prolyl-[protein] + UDP-beta-L-arabinofuranose = O-(beta-L-arabinofuranosyl)-trans-4-hydroxy-L-prolyl-[protein] + UDP + H(+). In terms of biological role, probable glycosyltransferase involved in the O-arabinosylation of several proteins including extensins and small signaling peptides. Catalyzes the transfer of the initial L-arabinose to the hydroxyl group of Hyp residues. Probably involved in the arabinosylation of CLE12, a signaling peptide that moves from root to shoot, to interact with SUNN receptor kinase signaling that regulates nodulation. Involved in long distance nodulation signaling events. Involved in the autoregulation of nodulation (AON), a long distance systemic signaling from root to shoot and back again, which allows legumes to limit the number of root nodules formed based on available nitrogen and previous rhizobial colonization. Functions in the root, upstream of the shoot receptor kinase SUNN and via CLE peptide, to control AON. In Medicago truncatula (Barrel medic), this protein is Hydroxyproline O-arabinosyltransferase RDN1.